A 325-amino-acid chain; its full sequence is Diaminopimelate epimerase (325 aa).

Substrate-binding residues include asparagine 11 and asparagine 69. Cysteine 78 acts as the Proton donor in catalysis. Substrate is bound by residues 79–80, asparagine 166, asparagine 203, and 221–222; these read GN and ER. The Proton acceptor role is filled by cysteine 230. Position 231-232 (231-232) interacts with substrate; that stretch reads GT.

Belongs to the diaminopimelate epimerase family. In terms of assembly, homodimer.

It is found in the cytoplasm. The enzyme catalyses (2S,6S)-2,6-diaminopimelate = meso-2,6-diaminopimelate. It participates in amino-acid biosynthesis; L-lysine biosynthesis via DAP pathway; DL-2,6-diaminopimelate from LL-2,6-diaminopimelate: step 1/1. In terms of biological role, catalyzes the stereoinversion of LL-2,6-diaminopimelate (L,L-DAP) to meso-diaminopimelate (meso-DAP), a precursor of L-lysine and an essential component of the bacterial peptidoglycan. The polypeptide is Diaminopimelate epimerase (Ligilactobacillus salivarius (strain UCC118) (Lactobacillus salivarius)).